The following is a 372-amino-acid chain: Lipoyl synthase, mitochondrial (372 aa).

[4Fe-4S] cluster contacts are provided by Cys-106, Cys-111, Cys-117, Cys-137, Cys-141, Cys-144, and Ser-352. Residues 122-341 form the Radical SAM core domain; the sequence is EYGTATATIM…EKAGNELGFL (220 aa).

It belongs to the radical SAM superfamily. Lipoyl synthase family. The cofactor is [4Fe-4S] cluster.

The protein localises to the mitochondrion. The enzyme catalyses [[Fe-S] cluster scaffold protein carrying a second [4Fe-4S](2+) cluster] + N(6)-octanoyl-L-lysyl-[protein] + 2 oxidized [2Fe-2S]-[ferredoxin] + 2 S-adenosyl-L-methionine + 4 H(+) = [[Fe-S] cluster scaffold protein] + N(6)-[(R)-dihydrolipoyl]-L-lysyl-[protein] + 4 Fe(3+) + 2 hydrogen sulfide + 2 5'-deoxyadenosine + 2 L-methionine + 2 reduced [2Fe-2S]-[ferredoxin]. Its pathway is protein modification; protein lipoylation via endogenous pathway; protein N(6)-(lipoyl)lysine from octanoyl-[acyl-carrier-protein]: step 2/2. Functionally, catalyzes the radical-mediated insertion of two sulfur atoms into the C-6 and C-8 positions of the octanoyl moiety bound to the lipoyl domains of lipoate-dependent enzymes, thereby converting the octanoylated domains into lipoylated derivatives. In Xenopus laevis (African clawed frog), this protein is Lipoyl synthase, mitochondrial (lias).